A 578-amino-acid chain; its full sequence is 2-hydroxyacyl-CoA lyase 1 (578 aa).

Residue serine 4 is modified to Phosphoserine. A thiamine diphosphate-binding site is contributed by glutamate 60. N6-succinyllysine is present on residues lysine 351, lysine 358, and lysine 365. The thiamine pyrophosphate binding stretch occupies residues 401–486 (TMDIGRTVLQ…LLVVNNNGIY (86 aa)). Residues aspartate 455 and asparagine 482 each contribute to the Mg(2+) site. The short motif at 576–578 (SNM) is the Microbody targeting signal element.

Belongs to the TPP enzyme family. As to quaternary structure, homotetramer. The cofactor is Mg(2+). Requires thiamine diphosphate as cofactor. As to expression, widely expressed.

The protein localises to the peroxisome. It carries out the reaction a 2-hydroxy-3-methyl fatty acyl-CoA = a 2-methyl-branched fatty aldehyde + formyl-CoA. The catalysed reaction is an (R)-2-hydroxy-long-chain-fatty acyl-CoA = a long-chain fatty aldehyde + formyl-CoA. The enzyme catalyses 2-hydroxy-3-methylhexadecanoyl-CoA = 2-methylpentadecanal + formyl-CoA. It catalyses the reaction 2-hydroxyoctadecanoyl-CoA = heptadecanal + formyl-CoA. It carries out the reaction 2-hydroxyphytanoyl-CoA = 2,6,10,14-tetramethylpentadecanal + formyl-CoA. It functions in the pathway lipid metabolism; fatty acid metabolism. Its function is as follows. Peroxisomal 2-OH acyl-CoA lyase involved in the cleavage (C1 removal) reaction in the fatty acid alpha-oxydation in a thiamine pyrophosphate (TPP)-dependent manner. Involved in the degradation of 3-methyl-branched fatty acids like phytanic acid and the shortening of 2-hydroxy long-chain fatty acids. Plays a significant role in the biosynthesis of heptadecanal in the liver. The sequence is that of 2-hydroxyacyl-CoA lyase 1 from Homo sapiens (Human).